Reading from the N-terminus, the 336-residue chain is Holliday junction branch migration complex subunit RuvB (336 aa).

Residues 4–184 (ADRLISAASN…FGIVQRLEFY (181 aa)) form a large ATPase domain (RuvB-L) region. ATP-binding positions include Ile23, Arg24, Gly65, Lys68, Thr69, Thr70, 131 to 133 (EDY), Arg174, Tyr184, and Arg221. A Mg(2+)-binding site is contributed by Thr69. The interval 185-255 (QVPDLQYIVG…VAAQALDMLN (71 aa)) is small ATPAse domain (RuvB-S). The tract at residues 258–336 (AEGFDYMDRK…HFGITPPEMP (79 aa)) is head domain (RuvB-H). Arg294, Arg313, and Arg318 together coordinate DNA.

Belongs to the RuvB family. As to quaternary structure, homohexamer. Forms an RuvA(8)-RuvB(12)-Holliday junction (HJ) complex. HJ DNA is sandwiched between 2 RuvA tetramers; dsDNA enters through RuvA and exits via RuvB. An RuvB hexamer assembles on each DNA strand where it exits the tetramer. Each RuvB hexamer is contacted by two RuvA subunits (via domain III) on 2 adjacent RuvB subunits; this complex drives branch migration. In the full resolvosome a probable DNA-RuvA(4)-RuvB(12)-RuvC(2) complex forms which resolves the HJ.

It is found in the cytoplasm. It catalyses the reaction ATP + H2O = ADP + phosphate + H(+). Its function is as follows. The RuvA-RuvB-RuvC complex processes Holliday junction (HJ) DNA during genetic recombination and DNA repair, while the RuvA-RuvB complex plays an important role in the rescue of blocked DNA replication forks via replication fork reversal (RFR). RuvA specifically binds to HJ cruciform DNA, conferring on it an open structure. The RuvB hexamer acts as an ATP-dependent pump, pulling dsDNA into and through the RuvAB complex. RuvB forms 2 homohexamers on either side of HJ DNA bound by 1 or 2 RuvA tetramers; 4 subunits per hexamer contact DNA at a time. Coordinated motions by a converter formed by DNA-disengaged RuvB subunits stimulates ATP hydrolysis and nucleotide exchange. Immobilization of the converter enables RuvB to convert the ATP-contained energy into a lever motion, pulling 2 nucleotides of DNA out of the RuvA tetramer per ATP hydrolyzed, thus driving DNA branch migration. The RuvB motors rotate together with the DNA substrate, which together with the progressing nucleotide cycle form the mechanistic basis for DNA recombination by continuous HJ branch migration. Branch migration allows RuvC to scan DNA until it finds its consensus sequence, where it cleaves and resolves cruciform DNA. This chain is Holliday junction branch migration complex subunit RuvB, found in Enterobacter sp. (strain 638).